Reading from the N-terminus, the 94-residue chain is Putative septation protein SpoVG (94 aa).

This sequence belongs to the SpoVG family.

Functionally, could be involved in septation. This is Putative septation protein SpoVG from Acholeplasma laidlawii (strain PG-8A).